We begin with the raw amino-acid sequence, 1050 residues long: ATP-dependent DNA helicase MPH1 (1050 aa).

Residues 95-262 (IVQRAFYHNL…EIIDNLNISK (168 aa)) enclose the Helicase ATP-binding domain. Residue 108–115 (LPTGLGKT) participates in ATP binding. Positions 210 to 213 (DEAH) match the DEAH box motif. A Helicase C-terminal domain is found at 431–631 (KIEAMMEELD…LIDLKEQNRM (201 aa)). 2 disordered regions span residues 493 to 524 (DESN…AQIN) and 743 to 821 (DSDE…PPKR). Positions 499 to 508 (KKSKGKRVGK) are enriched in basic residues. Residues 786-799 (RTLDQHHSASEERG) are compositionally biased toward basic and acidic residues. The segment covering 800-810 (INSNFSHESNL) has biased composition (polar residues).

Belongs to the DEAD box helicase family. DEAH subfamily. FANCM sub-subfamily. In terms of assembly, interacts with the MHF histone-fold complex to form the FANCM-MHF complex.

It localises to the nucleus. The catalysed reaction is ATP + H2O = ADP + phosphate + H(+). Functionally, ATP-dependent DNA helicase involved in DNA damage repair by homologous recombination and in genome maintenance. Capable of unwinding D-loops. Plays a role in limiting crossover recombinants during mitotic DNA double-strand break (DSB) repair. Component of a FANCM-MHF complex which promotes gene conversion at blocked replication forks, probably by reversal of the stalled fork. The protein is ATP-dependent DNA helicase MPH1 of Scheffersomyces stipitis (strain ATCC 58785 / CBS 6054 / NBRC 10063 / NRRL Y-11545) (Yeast).